The following is a 343-amino-acid chain: Putative MO25-like protein At4g17270 (343 aa).

The protein belongs to the Mo25 family.

This is Putative MO25-like protein At4g17270 from Arabidopsis thaliana (Mouse-ear cress).